Consider the following 244-residue polypeptide: MFKWLMSSLCGTKNPASLEEVYEPIMGGKNPATMLRLQSALAAVNALLPATLTIEDVISSADNTRRLVKAQTLARTYQACQHNIECLSRHRASSDNPNLNAVVATHMANAKRLSDTCLAALMHLYLSVGAVDATTDTMVDHAIRMTAENSVVMADVAVLEKTLGLEPQPSVMAHDLLALESSVYNSGNSVPVNDYPAEDVESTQSVHSPLLSKRPSNTEVVCSSIPVKSNLKSKPRRKPSLVAA.

Cys10 carries S-palmitoyl cysteine; by host lipidation.

It belongs to the herpesviridae UL51 family. Oligomerizes. Interacts with ORF55; this interaction mediates ORF55 incorporation to virions. Post-translationally, phosphorylated. In terms of processing, palmitoylation is necessary for Golgi localization.

The protein localises to the virion tegument. It localises to the host cytoplasm. Its subcellular location is the host Golgi apparatus. In terms of biological role, plays several roles during the time course of infection, including egress of virus particles from the perinuclear space and secondary envelopment of cytoplasmic capsids that bud into specific trans-Golgi network (TGN)-derived membranes. The protein is Tegument protein UL51 homolog (8) of Equus caballus (Horse).